The chain runs to 427 residues: Glutamate-1-semialdehyde 2,1-aminomutase (427 aa).

Lysine 267 is subject to N6-(pyridoxal phosphate)lysine.

It belongs to the class-III pyridoxal-phosphate-dependent aminotransferase family. HemL subfamily. As to quaternary structure, homodimer. It depends on pyridoxal 5'-phosphate as a cofactor.

It localises to the cytoplasm. The enzyme catalyses (S)-4-amino-5-oxopentanoate = 5-aminolevulinate. Its pathway is porphyrin-containing compound metabolism; protoporphyrin-IX biosynthesis; 5-aminolevulinate from L-glutamyl-tRNA(Glu): step 2/2. The protein is Glutamate-1-semialdehyde 2,1-aminomutase of Sulfurihydrogenibium azorense (strain DSM 15241 / OCM 825 / Az-Fu1).